Consider the following 156-residue polypeptide: Small ribosomal subunit protein uS7 (156 aa).

Belongs to the universal ribosomal protein uS7 family. As to quaternary structure, part of the 30S ribosomal subunit. Contacts proteins S9 and S11.

Functionally, one of the primary rRNA binding proteins, it binds directly to 16S rRNA where it nucleates assembly of the head domain of the 30S subunit. Is located at the subunit interface close to the decoding center, probably blocks exit of the E-site tRNA. This is Small ribosomal subunit protein uS7 from Geobacter sulfurreducens (strain ATCC 51573 / DSM 12127 / PCA).